The sequence spans 381 residues: MTTYQKIIPIANQILKKYDLCDHCLGRLFTKQLYLSSNKLLGKKLKKNSKSSQRCYICKNLFDNLNYFLNMMIDSASHYSYSSFSVGATIKPSIIDRDDVIRSKYKLKGIDGIKTDVTKELGKLFSKKTKKSFDSLDPEIVFTVNLKDEFCDIRSKSLTLSGRYVKPVRGFLQKQKSCSNCSGKGCRICDFHGIKEFDSVEGEISQFLFKKLGGTTAKFTWIGGEDKSSLILGTGRPFFVKIQNPHKRKLRAKSANLEHIKVSNFKIVADSPKKPLKFNSSVEARISTSSIIDAKLLRKLKNLTKKPIAVYEKSGKRSEKRILSIKYKKSDETSFTLFFKFEGGLPVKRFVTGDDVSPGISQILDMSCKCLEFDFHDVEVK.

Asp-226 functions as the Nucleophile in the catalytic mechanism.

This sequence belongs to the pseudouridine synthase Pus10 family.

It carries out the reaction uridine(54) in tRNA = pseudouridine(54) in tRNA. It catalyses the reaction uridine(55) in tRNA = pseudouridine(55) in tRNA. Responsible for synthesis of pseudouridine from uracil-54 and uracil-55 in the psi GC loop of transfer RNAs. The sequence is that of tRNA pseudouridine synthase Pus10 from Nitrosopumilus maritimus (strain SCM1).